Consider the following 684-residue polypeptide: Protein LDB19 (684 aa).

Disordered regions lie at residues 462 to 483 (GEAQ…PAGL), 510 to 531 (SAEE…DKRI), and 593 to 632 (SSRV…TSGS). Positions 593–602 (SSRVVSGPES) are enriched in low complexity.

It belongs to the LDB19 family.

The protein localises to the cytoplasm. It localises to the golgi apparatus. Its function is as follows. May be involved in protein-linked oligosaccharide phosphorylation. The sequence is that of Protein LDB19 (LDB19) from Eremothecium gossypii (strain ATCC 10895 / CBS 109.51 / FGSC 9923 / NRRL Y-1056) (Yeast).